The following is a 92-amino-acid chain: UPF0358 protein SH1840 (92 aa).

It belongs to the UPF0358 family.

The chain is UPF0358 protein SH1840 from Staphylococcus haemolyticus (strain JCSC1435).